A 374-amino-acid chain; its full sequence is UDP-N-acetylglucosamine--N-acetylmuramyl-(pentapeptide) pyrophosphoryl-undecaprenol N-acetylglucosamine transferase (374 aa).

UDP-N-acetyl-alpha-D-glucosamine-binding positions include 10-12 (TGG), Asn-124, Arg-166, Ser-196, and Gln-294.

It belongs to the glycosyltransferase 28 family. MurG subfamily.

The protein resides in the cell membrane. It catalyses the reaction di-trans,octa-cis-undecaprenyl diphospho-N-acetyl-alpha-D-muramoyl-L-alanyl-D-glutamyl-meso-2,6-diaminopimeloyl-D-alanyl-D-alanine + UDP-N-acetyl-alpha-D-glucosamine = di-trans,octa-cis-undecaprenyl diphospho-[N-acetyl-alpha-D-glucosaminyl-(1-&gt;4)]-N-acetyl-alpha-D-muramoyl-L-alanyl-D-glutamyl-meso-2,6-diaminopimeloyl-D-alanyl-D-alanine + UDP + H(+). It participates in cell wall biogenesis; peptidoglycan biosynthesis. Functionally, cell wall formation. Catalyzes the transfer of a GlcNAc subunit on undecaprenyl-pyrophosphoryl-MurNAc-pentapeptide (lipid intermediate I) to form undecaprenyl-pyrophosphoryl-MurNAc-(pentapeptide)GlcNAc (lipid intermediate II). This is UDP-N-acetylglucosamine--N-acetylmuramyl-(pentapeptide) pyrophosphoryl-undecaprenol N-acetylglucosamine transferase from Symbiobacterium thermophilum (strain DSM 24528 / JCM 14929 / IAM 14863 / T).